Consider the following 964-residue polypeptide: Probable outer membrane protein PmpE (964 aa).

Residues 1–18 (MKKAFFFFLIGNSLSGLA) form the signal peptide. The 282-residue stretch at 683–964 (LTPSGHPFWG…YLNGEIALRF (282 aa)) folds into the Autotransporter domain.

This sequence belongs to the PMP outer membrane protein family.

The protein localises to the secreted. Its subcellular location is the cell wall. It is found in the cell outer membrane. In Chlamydia trachomatis serovar D (strain ATCC VR-885 / DSM 19411 / UW-3/Cx), this protein is Probable outer membrane protein PmpE (pmpE).